We begin with the raw amino-acid sequence, 179 residues long: MLRFKELYQQKIIENLQKEFSYKSKHEIPQIKKIVINMGVGEAIADSKVINNAVNDLTLISGQKPVVTLARKSIATFKLRESMKIGCKVTLRKDRMYDFLERLVIVALPRVKEFRGFSYKSFDGKGNFTFGLKEQIVFPEINYDKIDTIRGMDITIVTSAKTDKESKFLLSGFNLPFYN.

The protein belongs to the universal ribosomal protein uL5 family. As to quaternary structure, part of the 50S ribosomal subunit; part of the 5S rRNA/L5/L18/L25 subcomplex. Contacts the 5S rRNA and the P site tRNA. Forms a bridge to the 30S subunit in the 70S ribosome.

Functionally, this is one of the proteins that bind and probably mediate the attachment of the 5S RNA into the large ribosomal subunit, where it forms part of the central protuberance. In the 70S ribosome it contacts protein S13 of the 30S subunit (bridge B1b), connecting the 2 subunits; this bridge is implicated in subunit movement. Contacts the P site tRNA; the 5S rRNA and some of its associated proteins might help stabilize positioning of ribosome-bound tRNAs. The protein is Large ribosomal subunit protein uL5 of Rickettsia felis (strain ATCC VR-1525 / URRWXCal2) (Rickettsia azadi).